The primary structure comprises 307 residues: D-alanine--D-alanine ligase (307 aa).

Positions 105 to 304 (KMLWKGFGLP…FEKLVEKILE (200 aa)) constitute an ATP-grasp domain. ATP is bound at residue 135 to 190 (VARLGLPLMVKPSREGSSVGLTKVDSADKLKSAVDLALKFDDIVLIEEWLSGDELT). Mg(2+) is bound by residues Asp-258, Glu-271, and Asn-273.

It belongs to the D-alanine--D-alanine ligase family. Mg(2+) serves as cofactor. Requires Mn(2+) as cofactor.

It localises to the cytoplasm. It carries out the reaction 2 D-alanine + ATP = D-alanyl-D-alanine + ADP + phosphate + H(+). Its pathway is cell wall biogenesis; peptidoglycan biosynthesis. Cell wall formation. This Actinobacillus succinogenes (strain ATCC 55618 / DSM 22257 / CCUG 43843 / 130Z) protein is D-alanine--D-alanine ligase.